A 202-amino-acid chain; its full sequence is Putative pituitary tumor-transforming gene 3 protein (202 aa).

The D-box signature appears at 61–64; that stretch reads RKAL. Residues 67-92 form a disordered region; that stretch reads VNRATEKSVKTNGPLKQKQPSFSAKK. The SH3-binding signature appears at 163 to 173; that stretch reads PPLPLKMPSPP.

The protein belongs to the securin family.

The protein resides in the cytoplasm. Its subcellular location is the nucleus. The polypeptide is Putative pituitary tumor-transforming gene 3 protein (PTTG3) (Pongo pygmaeus (Bornean orangutan)).